Consider the following 207-residue polypeptide: Thiamine-phosphate synthase (207 aa).

Residues 35–39 (QYRDK) and Asn-67 each bind 4-amino-2-methyl-5-(diphosphooxymethyl)pyrimidine. Asp-68 and Asp-86 together coordinate Mg(2+). Thr-105 serves as a coordination point for 4-amino-2-methyl-5-(diphosphooxymethyl)pyrimidine. Position 132-134 (132-134 (SVT)) interacts with 2-[(2R,5Z)-2-carboxy-4-methylthiazol-5(2H)-ylidene]ethyl phosphate. Residue Lys-135 coordinates 4-amino-2-methyl-5-(diphosphooxymethyl)pyrimidine. Gly-162 lines the 2-[(2R,5Z)-2-carboxy-4-methylthiazol-5(2H)-ylidene]ethyl phosphate pocket.

The protein belongs to the thiamine-phosphate synthase family. Mg(2+) is required as a cofactor.

It carries out the reaction 2-[(2R,5Z)-2-carboxy-4-methylthiazol-5(2H)-ylidene]ethyl phosphate + 4-amino-2-methyl-5-(diphosphooxymethyl)pyrimidine + 2 H(+) = thiamine phosphate + CO2 + diphosphate. It catalyses the reaction 2-(2-carboxy-4-methylthiazol-5-yl)ethyl phosphate + 4-amino-2-methyl-5-(diphosphooxymethyl)pyrimidine + 2 H(+) = thiamine phosphate + CO2 + diphosphate. The catalysed reaction is 4-methyl-5-(2-phosphooxyethyl)-thiazole + 4-amino-2-methyl-5-(diphosphooxymethyl)pyrimidine + H(+) = thiamine phosphate + diphosphate. It functions in the pathway cofactor biosynthesis; thiamine diphosphate biosynthesis; thiamine phosphate from 4-amino-2-methyl-5-diphosphomethylpyrimidine and 4-methyl-5-(2-phosphoethyl)-thiazole: step 1/1. Condenses 4-methyl-5-(beta-hydroxyethyl)thiazole monophosphate (THZ-P) and 2-methyl-4-amino-5-hydroxymethyl pyrimidine pyrophosphate (HMP-PP) to form thiamine monophosphate (TMP). This chain is Thiamine-phosphate synthase, found in Pseudomonas putida (strain GB-1).